Here is a 157-residue protein sequence, read N- to C-terminus: Baculoviral IAP repeat-containing protein 5.2-A (157 aa).

A BIR repeat occupies Arg31 to Ala101. Phosphothreonine; by CDK1 is present on Thr47. The Zn(2+) site is built by Cys70, Cys73, His90, and Cys97.

This sequence belongs to the IAP family. In terms of assembly, component of the CPC at least composed of survivin/birc5, incenp, cdca8/borealin and/or cdca9/dasra-A, and aurkb/aurora-B. Interacts directly with incenp (via N-terminus). Interacts with rxra; the interaction is stronger in the absence of 9-cis retinoic acids. In terms of processing, ubiquitination is required for centrosome-targeting. As to expression, highly expressed in vascular endothelial cells of tadpoles.

The protein resides in the cytoplasm. It is found in the nucleus. It localises to the chromosome. The protein localises to the centromere. Its subcellular location is the cytoskeleton. The protein resides in the spindle. Its function is as follows. Component of the chromosomal passenger complex (CPC), a complex that acts as a key regulator of mitosis. The CPC complex has essential functions at the centromere in ensuring correct chromosome alignment and segregation and is required for chromatin-induced microtubule stabilization and spindle assembly. Does not appear to exhibit anti-apoptotic activity. Plays a role in increasing blood vessel size during development. The polypeptide is Baculoviral IAP repeat-containing protein 5.2-A (birc5.2-a) (Xenopus laevis (African clawed frog)).